Reading from the N-terminus, the 663-residue chain is Polyunsaturated fatty acid lipoxygenase ALOX15 (663 aa).

Residues 2–115 form the PLAT domain; sequence GVYRVCVSTG…VQSLPVGTGC (114 aa). The 548-residue stretch at 116–663 folds into the Lipoxygenase domain; it reads TTVGDPQGLF…PSIVENSVAI (548 aa). Residues histidine 361, histidine 366, histidine 541, histidine 545, and isoleucine 663 each contribute to the Fe cation site.

Belongs to the lipoxygenase family. As to quaternary structure, interacts with PEBP1; in response to IL13/interleukin-13, prevents the interaction of PEBP1 with RAF1 to activate the ERK signaling cascade. Fe cation serves as cofactor. As to expression, detected in reticulocytes (at protein level).

The protein resides in the cytoplasm. Its subcellular location is the cytosol. It is found in the cell membrane. It localises to the lipid droplet. It carries out the reaction (5Z,8Z,11Z,14Z)-eicosatetraenoate + O2 = (12S)-hydroperoxy-(5Z,8Z,10E,14Z)-eicosatetraenoate. It catalyses the reaction (5Z,8Z,11Z,14Z)-eicosatetraenoate + O2 = (15S)-hydroperoxy-(5Z,8Z,11Z,13E)-eicosatetraenoate. The enzyme catalyses (9Z,12Z)-octadecadienoate + O2 = (13S)-hydroperoxy-(9Z,11E)-octadecadienoate. The catalysed reaction is (5Z,8Z,11Z,14Z)-eicosatetraenoate + 2 O2 = (14R,15S)-dihydroperoxy-(5Z,8Z,10E,12E)-eicosatetraenoate. It carries out the reaction (5Z,8Z,11Z,14Z)-eicosatetraenoate + 2 O2 = (8S,15S)-dihydroperoxy-(5Z,9E,11Z,13E)-eicosatetraenoate. It catalyses the reaction (14S,15R)-epoxy-(5Z,8Z,11Z)-eicosatrienoate + O2 = (8S)-hydroperoxy-(14S,15R)-epoxy-(5Z,9E,11Z)-eicosatrienoate. The enzyme catalyses (14S,15R)-epoxy-(5Z,8Z,11Z)-eicosatrienoate + O2 = (12S)-hydroperoxy-(14S,15R)-epoxy-(5Z,8Z,10E)-eicosatrienoate. The catalysed reaction is (14R,15S)-epoxy-(5Z,8Z,11Z)-eicosatrienoate + O2 = (5S)-hydroperoxy-(14R,15S)-epoxy-(6E,8Z,11Z)-eicosatrienoate. It carries out the reaction (14R,15S)-epoxy-(5Z,8Z,11Z)-eicosatrienoate + O2 = (12S)-hydroperoxy-(14R,15S)-epoxy-(5Z,8Z,10E)-eicosatrienoate. It catalyses the reaction (15R)-hydroperoxy-(5Z,8Z,11Z,13E)-eicosatetraenoate = 15-oxo-(5Z,8Z,11Z,13E)-eicosatetraenoate + H2O. The enzyme catalyses (15S)-hydroperoxy-(5Z,8Z,11Z,13E)-eicosatetraenoate = (14S,15S)-epoxy-(5Z,8Z,10E,12E)-eicosatetraenoate + H2O. The catalysed reaction is (12S)-hydroperoxy-(5Z,8Z,10E,14Z)-eicosatetraenoate = (8S)-hydroxy-(11S,12S)-epoxy-(5Z,9E,14Z)-eicosatrienoate. It carries out the reaction (4Z,7Z,10Z,13Z,16Z)-docosapentaenoate + O2 = 14-hydroperoxy-(4Z,7Z,10Z,12E,16Z)-docosapentaenoate. It catalyses the reaction (7Z,10Z,13Z,16Z,19Z)-docosapentaenoate + O2 = 14-hydroperoxy-(7Z,10Z,12E,16Z,19Z)-docosapentaenoate. The enzyme catalyses (4Z,7Z,10Z,13Z,16Z,19Z)-docosahexaenoate + O2 = (14S)-hydroperoxy-(4Z,7Z,10Z,12E,16Z,19Z)-docosahexaenoate. The catalysed reaction is (4Z,7Z,10Z,13Z,16Z,19Z)-docosahexaenoate + O2 = (17S)-hydroperoxy-(4Z,7Z,10Z,13Z,15E,19Z)-docosahexaenoate. It carries out the reaction (7S)-hydroperoxy-(4Z,8E,10Z,13Z,16Z,19Z)-docosahexaenoate + O2 = (7S,14S)-dihydroperoxy-(4Z,8E,10Z,12E,16Z,19Z)-docosahexaenoate. It catalyses the reaction (7S)-hydroperoxy-(4Z,8E,10Z,13Z,16Z,19Z)-docosahexaenoate + O2 = (7S,17S)-dihydroperoxy-(4Z,8E,10Z,13Z,15E,19Z)-docosahexaenoate. The enzyme catalyses (4Z,7Z,10Z,13Z,16Z,19Z)-docosahexaenoate + O2 = (11S)-hydroperoxy-(4Z,7Z,9E,13Z,16Z,19Z)-docosahexaenoate. The catalysed reaction is N-(5Z,8Z,11Z,14Z)-eicosatetraenoyl-taurine + O2 = N-(15S)-hydroperoxy-(5Z,8Z,11Z,13E)-eicosatetraenoyl-taurine. It carries out the reaction N-(5Z,8Z,11Z,14Z)-eicosatetraenoyl-gamma-aminobutanoate + O2 = N-(15S)-hydroperoxy-(5Z,8Z,11Z,13E)-eicosatetraenoyl-gamma-aminobutanoate. It catalyses the reaction N-(5Z,8Z,11Z,14Z)-eicosatetraenoyl-glycine + O2 = N-(15S)-hydroperoxy-(5Z,8Z,11Z,13E)-eicosatetraenoyl-glycine. The enzyme catalyses N-(5Z,8Z,11Z,14Z)-eicosatetraenoyl-L-alanine + O2 = N-(15S)-hydroperoxy-(5Z,8Z,11Z,13E)-eicosatetraenoyl-alanine. The catalysed reaction is N-(5Z,8Z,11Z,14Z)-eicosatetraenoyl-taurine + O2 = N-(12S)-hydroperoxy-(5Z,8Z,10E,14Z)-eicosatetraenoyl-taurine. It carries out the reaction N-(5Z,8Z,11Z,14Z)-eicosatetraenoyl-gamma-aminobutanoate + O2 = N-(12S)-hydroperoxy-(5Z,8Z,10E,14Z)-eicosatetraenoyl-gamma-aminobutanoate. It catalyses the reaction N-(5Z,8Z,11Z,14Z)-eicosatetraenoyl-glycine + O2 = N-(12S)-hydroperoxy-(5Z,8Z,10E,14Z)-eicosatetraenoyl-glycine. The enzyme catalyses N-(5Z,8Z,11Z,14Z)-eicosatetraenoyl-L-alanine + O2 = N-(12S)-hydroperoxy-(5Z,8Z,10E,14Z)-eicosatetraenoyl-alanine. It functions in the pathway lipid metabolism; hydroperoxy eicosatetraenoic acid biosynthesis. In terms of biological role, non-heme iron-containing dioxygenase that catalyzes the stereo-specific peroxidation of free and esterified polyunsaturated fatty acids generating a spectrum of bioactive lipid mediators. It inserts peroxyl groups at C12 or C15 of arachidonate ((5Z,8Z,11Z,14Z)-eicosatetraenoate) producing both 12-hydroperoxyeicosatetraenoate/12-HPETE and 15-hydroperoxyeicosatetraenoate/15-HPETE. It may then act on 12-HPETE to produce hepoxilins, which may show pro-inflammatory properties. Can also peroxidize linoleate ((9Z,12Z)-octadecadienoate) to 13-hydroperoxyoctadecadienoate. May participate in the sequential oxidations of DHA ((4Z,7Z,10Z,13Z,16Z,19Z)-docosahexaenoate) to generate specialized pro-resolving mediators (SPMs)like resolvin D5 ((7S,17S)-diHPDHA) and (7S,14S)-diHPDHA, that actively down-regulate the immune response and have anti-aggregation properties with platelets. Can convert epoxy fatty acids to hydroperoxy-epoxides derivatives followed by an intramolecular nucleophilic substitution leading to the formation of monocyclic endoperoxides. Plays an important role during the maintenance of self-tolerance by peroxidizing membrane-bound phosphatidylethanolamine which can then signal the sorting process for clearance of apoptotic cells during inflammation and prevent an autoimmune response. In addition to its role in the immune and inflammatory responses, this enzyme may play a role in epithelial wound healing in the cornea through production of lipoxin A4 (LXA(4)) and docosahexaenoic acid-derived neuroprotectin D1 (NPD1; 10R,17S-HDHA), both lipid autacoids exhibit anti-inflammatory and neuroprotective properties. Furthermore, it may regulate actin polymerization which is crucial for several biological processes such as the phagocytosis of apoptotic cells. It is also implicated in the generation of endogenous ligands for peroxisome proliferator activated receptor (PPAR-gamma), hence modulating macrophage development and function. It may also exert a negative effect on skeletal development by regulating bone mass through this pathway. As well as participates in ER stress and downstream inflammation in adipocytes, pancreatic islets, and liver. Finally, it is also involved in the cellular response to IL13/interleukin-13. The protein is Polyunsaturated fatty acid lipoxygenase ALOX15 of Oryctolagus cuniculus (Rabbit).